The primary structure comprises 196 residues: Large ribosomal subunit protein bL9 (196 aa).

This sequence belongs to the bacterial ribosomal protein bL9 family.

In terms of biological role, binds to the 23S rRNA. The protein is Large ribosomal subunit protein bL9 of Rhodopseudomonas palustris (strain HaA2).